Consider the following 226-residue polypeptide: Glutathione peroxidase 3 (226 aa).

Positions 1 to 24 are cleaved as a signal peptide; the sequence is MARILRASCLLSLLLAGFVPPGRG. Residue selenocysteine 73 is part of the active site. Position 73 (selenocysteine 73) is a non-standard amino acid, selenocysteine.

The protein belongs to the glutathione peroxidase family. In terms of assembly, homotetramer. Secreted in plasma.

It is found in the secreted. It carries out the reaction 2 glutathione + H2O2 = glutathione disulfide + 2 H2O. The catalysed reaction is tert-butyl hydroperoxide + 2 glutathione = tert-butanol + glutathione disulfide + H2O. Protects cells and enzymes from oxidative damage, by catalyzing the reduction of hydrogen peroxide, lipid peroxides and organic hydroperoxide, by glutathione. The polypeptide is Glutathione peroxidase 3 (Mus musculus (Mouse)).